Reading from the N-terminus, the 340-residue chain is Lipase chaperone (340 aa).

A helical transmembrane segment spans residues 4–24; it reads ILLLIPLAFAASLAWFVWLEP. A disordered region spans residues 29-51; sequence ETAPPASPQAGADRAPPAASAGE. Over residues 36–51 the composition is skewed to low complexity; that stretch reads PQAGADRAPPAASAGE.

This sequence belongs to the lipase chaperone family.

The protein localises to the cell inner membrane. Its function is as follows. May be involved in the folding of the extracellular lipase during its passage through the periplasm. The polypeptide is Lipase chaperone (lifO) (Pseudomonas aeruginosa (strain ATCC 15692 / DSM 22644 / CIP 104116 / JCM 14847 / LMG 12228 / 1C / PRS 101 / PAO1)).